Consider the following 92-residue polypeptide: Small ribosomal subunit protein uS19 (92 aa).

Belongs to the universal ribosomal protein uS19 family.

Functionally, protein S19 forms a complex with S13 that binds strongly to the 16S ribosomal RNA. The polypeptide is Small ribosomal subunit protein uS19 (Rickettsia typhi (strain ATCC VR-144 / Wilmington)).